The primary structure comprises 351 residues: uncharacterized protein (351 aa).

D215, D226, H290, E319, and E333 together coordinate Mn(2+).

It belongs to the peptidase M24B family. It depends on Mn(2+) as a cofactor.

This is an uncharacterized protein from Staphylococcus aureus (strain USA300).